We begin with the raw amino-acid sequence, 138 residues long: Basic phospholipase A2 Tpu-G6D49 (138 aa).

The signal sequence occupies residues Met1–Gly16. 7 disulfides stabilise this stretch: Cys42–Cys131, Cys44–Cys60, Cys59–Cys111, Cys65–Cys138, Cys66–Cys104, Cys73–Cys97, and Cys91–Cys102. Tyr43, Gly45, and Gly47 together coordinate Ca(2+). The active site involves His63. Residue Asp64 participates in Ca(2+) binding. Asp105 is a catalytic residue.

Monomer. The cofactor is Ca(2+). As to expression, expressed by the venom gland.

It localises to the secreted. The catalysed reaction is a 1,2-diacyl-sn-glycero-3-phosphocholine + H2O = a 1-acyl-sn-glycero-3-phosphocholine + a fatty acid + H(+). Functionally, snake venom phospholipase A2 (PLA2) that impairs hemostasis. It weakly inhibits ADP-induced platelet aggregation when tested on platelet rich plasma from human and rabbit blood (15-25% of inhibition at 5-10 ug of enzyme), and dose-dependently inhibits blood coagulation, possibly by inhibiting thrombin activation. Also induces local edema a few hours after injection in the hind foot. Exhibits high hydrolytic activities toward L-dipalmitoyl phosphatidylcholine. PLA2 catalyzes the calcium-dependent hydrolysis of the 2-acyl groups in 3-sn-phosphoglycerides. This is Basic phospholipase A2 Tpu-G6D49 from Craspedocephalus puniceus (Flat-nosed pitviper).